The primary structure comprises 294 residues: MNRVYNDHHIPVLLNEVVENLIWKPDGVYVDCTVGEGGHTRAIAERVLPYGGRVIGIDVDSEVLQIAEHNLLSYPNVQLFKFSYVELPVLLSLLQVHKVDGLLVDLGVSTYQLKAEGRGFSFNQDEPLDMRMNLENNLTAYHIVNTYPEEKLADIIYNYGEENFSRRIARAIVQNRPIQTTRQLVEVIKRALPYKEVHNRKRHFATKTFQAIRIEVNKEIENISKFLEFAPDYLNSGGRLAIISFHSLEDRIVKHVFKNDKRLKPIGDFISPTTFEVAENPRARSAKLRLAERV.

S-adenosyl-L-methionine contacts are provided by residues 37–39, aspartate 58, leucine 93, aspartate 105, and glutamine 112; that span reads GGH.

It belongs to the methyltransferase superfamily. RsmH family.

The protein resides in the cytoplasm. The catalysed reaction is cytidine(1402) in 16S rRNA + S-adenosyl-L-methionine = N(4)-methylcytidine(1402) in 16S rRNA + S-adenosyl-L-homocysteine + H(+). In terms of biological role, specifically methylates the N4 position of cytidine in position 1402 (C1402) of 16S rRNA. In Fervidobacterium nodosum (strain ATCC 35602 / DSM 5306 / Rt17-B1), this protein is Ribosomal RNA small subunit methyltransferase H.